The following is a 161-amino-acid chain: Cytochrome b6-f complex subunit 4 (161 aa).

Transmembrane regions (helical) follow at residues 37 to 57 (LLYI…GLAV), 96 to 116 (LLGV…PFIE), and 132 to 152 (TVFL…TFPI).

This sequence belongs to the cytochrome b family. PetD subfamily. The 4 large subunits of the cytochrome b6-f complex are cytochrome b6, subunit IV (17 kDa polypeptide, PetD), cytochrome f and the Rieske protein, while the 4 small subunits are PetG, PetL, PetM and PetN. The complex functions as a dimer.

It is found in the cellular thylakoid membrane. In terms of biological role, component of the cytochrome b6-f complex, which mediates electron transfer between photosystem II (PSII) and photosystem I (PSI), cyclic electron flow around PSI, and state transitions. The sequence is that of Cytochrome b6-f complex subunit 4 from Cyanothece sp. (strain PCC 7425 / ATCC 29141).